Consider the following 273-residue polypeptide: MEAAPSRFMFLLFLLTCELAAEVAAEVEKSSDGPGAAQEPTWLTDVPAAMEFIAATEVAVIGFFQDLEIPAVPILHSMVQKFPGVSFGISTDSEVLTHYNITGNTICLFRLVDNEQLNLEDEDIESIDATKLSRFIEINSLHMVTEYNPVTVIGLFNSVIQIHLLLIMNKASPEYEENMHRYQKAAKLFQGKILFILVDSGMKENGKVISFFKLKESQLPALAIYQTLDDEWDTLPTAEVSVEHVQNFCDGFLSGKLLKENRESEGKTPKVEL.

The N-terminal stretch at 1 to 25 (MEAAPSRFMFLLFLLTCELAAEVAA) is a signal peptide. One can recognise a Thioredoxin domain in the interval 39-152 (EPTWLTDVPA…MVTEYNPVTV (114 aa)). Residue N100 is glycosylated (N-linked (GlcNAc...) asparagine). The interval 230–233 (DEWD) is PDIA3-binding site. The Prevents secretion from ER motif lies at 270-273 (KVEL).

It belongs to the protein disulfide isomerase family. As to quaternary structure, interacts with PDIA3.

The protein localises to the endoplasmic reticulum lumen. Specifically binds unfolded proteins and may recruit protein disulfide isomerase PDIA3 to unfolded substrates. Binds protein substrates via a hydrophobic pocket in the C-terminal domain. May play a role in the unfolded stress response. The sequence is that of Endoplasmic reticulum resident protein 27 (ERP27) from Homo sapiens (Human).